The chain runs to 140 residues: MRLRWQTIVLLLLILGGASASAVYFSMKGNIDVIEDAISVSPASFSIDIAKGAHYVKEVKVKNSGGEAEIYFEDIVEGPDKSAIDVSFHTESGESISSSNKLRLPAGTADSPSETVIHVHIDVDDDAPTGSYAIYIHAKQ.

An N-terminal signal peptide occupies residues 1–22 (MRLRWQTIVLLLLILGGASASA).

This is an uncharacterized protein from Archaeoglobus fulgidus (strain ATCC 49558 / DSM 4304 / JCM 9628 / NBRC 100126 / VC-16).